Reading from the N-terminus, the 657-residue chain is Glycogen debranching enzyme (657 aa).

D336 functions as the Nucleophile in the catalytic mechanism. The active-site Proton donor is the E371. Residues A460–K479 form a disordered region.

This sequence belongs to the glycosyl hydrolase 13 family.

It carries out the reaction Hydrolysis of (1-&gt;6)-alpha-D-glucosidic linkages to branches with degrees of polymerization of three or four glucose residues in limit dextrin.. It participates in glycan degradation; glycogen degradation. Functionally, removes maltotriose and maltotetraose chains that are attached by 1,6-alpha-linkage to the limit dextrin main chain, generating a debranched limit dextrin. The polypeptide is Glycogen debranching enzyme (Escherichia coli O127:H6 (strain E2348/69 / EPEC)).